Here is a 332-residue protein sequence, read N- to C-terminus: Malate dehydrogenase, cytoplasmic (332 aa).

Residues 16 to 17 (QI), aspartate 43, and glycine 90 contribute to the NAD(+) site. Residue arginine 99 participates in oxaloacetate binding. The NAD(+) site is built by glutamine 113 and asparagine 132. 4 residues coordinate oxaloacetate: asparagine 132, arginine 163, histidine 188, and serine 243. Catalysis depends on histidine 188, which acts as the Proton acceptor.

Belongs to the LDH/MDH superfamily. MDH type 2 family. As to quaternary structure, monomer. Expressed constitutively in roots.

Its subcellular location is the cell membrane. The catalysed reaction is (S)-malate + NAD(+) = oxaloacetate + NADH + H(+). Functionally, malate dehydrogenase; catalyzes a reversible NAD-dependent dehydrogenase reaction involved in central metabolism and redox homeostasis. The protein is Malate dehydrogenase, cytoplasmic of Zea mays (Maize).